The sequence spans 158 residues: Cytochrome c-type biogenesis protein CcmE (158 aa).

The Cytoplasmic portion of the chain corresponds to 1–7 (MKPRHRR). The chain crosses the membrane as a helical; Signal-anchor for type II membrane protein span at residues 8–28 (LTLIALVLGGLGLSAGLALTA). At 29–158 (FQDNLVFFFT…DGHPETTTAY (130 aa)) the chain is on the periplasmic side. The heme site is built by His123 and Tyr127. The interval 138–158 (RIGQGNGTPGPDGHPETTTAY) is disordered.

Belongs to the CcmE/CycJ family.

The protein localises to the cell inner membrane. Heme chaperone required for the biogenesis of c-type cytochromes. Transiently binds heme delivered by CcmC and transfers the heme to apo-cytochromes in a process facilitated by CcmF and CcmH. The sequence is that of Cytochrome c-type biogenesis protein CcmE from Alkalilimnicola ehrlichii (strain ATCC BAA-1101 / DSM 17681 / MLHE-1).